Here is a 285-residue protein sequence, read N- to C-terminus: Vacuolar protein sorting-associated protein 37B (285 aa).

Residues 50-170 (ASNRSLAEGN…EMVLKGQRLP (121 aa)) form an interaction with IST1 region. A VPS37 C-terminal domain is found at 84–173 (FEAYQIKKTK…LKGQRLPQAL (90 aa)). Residues 175-201 (PLPPRLPELAPTAPLPYPAPEASGPPA) form a disordered region. An Omega-N-methylarginine modification is found at Arg-218. The disordered stretch occupies residues 230 to 285 (GQAVPYPGLQCPPLPPRVGLPTQQGFSSQFVSPYPPPLPQRPPPRLPPHQPGFILQ). Positions 250 to 260 (PTQQGFSSQFV) are enriched in polar residues. Over residues 262 to 279 (PYPPPLPQRPPPRLPPHQ) the composition is skewed to pro residues.

Belongs to the VPS37 family. As to quaternary structure, component of the ESCRT-I complex (endosomal sorting complex required for transport I) which consists of TSG101, VPS28, a VPS37 protein (VPS37A to -D) and MVB12A or MVB12B in a 1:1:1:1 stoichiometry. Interacts with TSG101, VPS28, MVB12A and MVB12B. Component of the ESCRT-I complex (endosomal sorting complex required for transport I) which consists of TSG101, VPS28, a VPS37 protein (VPS37A to -D) and UBAP1 in a 1:1:1:1 stoichiometry. Interacts with CEP55. Interacts with IST1. In terms of tissue distribution, widely expressed. Expressed in macrophages and lymphocytes.

It is found in the late endosome membrane. Its function is as follows. Component of the ESCRT-I complex, a regulator of vesicular trafficking process. Required for the sorting of endocytic ubiquitinated cargos into multivesicular bodies. May be involved in cell growth and differentiation. This chain is Vacuolar protein sorting-associated protein 37B (VPS37B), found in Homo sapiens (Human).